A 219-amino-acid chain; its full sequence is RNA-free ribonuclease P (219 aa).

The protein belongs to the HARP family.

It catalyses the reaction Endonucleolytic cleavage of RNA, removing 5'-extranucleotides from tRNA precursor.. Its function is as follows. RNA-free RNase P that catalyzes the removal of the 5'-leader sequence from pre-tRNA to produce the mature 5'-terminus. The sequence is that of RNA-free ribonuclease P from Staphylothermus marinus (strain ATCC 43588 / DSM 3639 / JCM 9404 / F1).